Consider the following 579-residue polypeptide: uncharacterized protein (579 aa).

The protein belongs to the UbiD family.

This is an uncharacterized protein from Chlamydia muridarum (strain MoPn / Nigg).